Here is a 545-residue protein sequence, read N- to C-terminus: CTP synthase (545 aa).

Positions 1-266 (MATNYIFVTG…DSFVCDRFRL (266 aa)) are amidoligase domain. S14 lines the CTP pocket. S14 is a UTP binding site. ATP is bound by residues 15–20 (SLGKGI) and D72. Positions 72 and 140 each coordinate Mg(2+). CTP contacts are provided by residues 147-149 (DIE), 187-192 (KTKPTQ), and K223. UTP contacts are provided by residues 187 to 192 (KTKPTQ) and K223. 239 to 241 (KDV) contacts ATP. The region spanning 291-542 (TIGMVGKYVE…VAAAKAYQDS (252 aa)) is the Glutamine amidotransferase type-1 domain. G352 provides a ligand contact to L-glutamine. The active-site Nucleophile; for glutamine hydrolysis is C379. Residues 380 to 383 (LGMQ), E403, and R470 each bind L-glutamine. Catalysis depends on residues H515 and E517.

This sequence belongs to the CTP synthase family. Homotetramer.

It catalyses the reaction UTP + L-glutamine + ATP + H2O = CTP + L-glutamate + ADP + phosphate + 2 H(+). The enzyme catalyses L-glutamine + H2O = L-glutamate + NH4(+). The catalysed reaction is UTP + NH4(+) + ATP = CTP + ADP + phosphate + 2 H(+). Its pathway is pyrimidine metabolism; CTP biosynthesis via de novo pathway; CTP from UDP: step 2/2. With respect to regulation, allosterically activated by GTP, when glutamine is the substrate; GTP has no effect on the reaction when ammonia is the substrate. The allosteric effector GTP functions by stabilizing the protein conformation that binds the tetrahedral intermediate(s) formed during glutamine hydrolysis. Inhibited by the product CTP, via allosteric rather than competitive inhibition. Catalyzes the ATP-dependent amination of UTP to CTP with either L-glutamine or ammonia as the source of nitrogen. Regulates intracellular CTP levels through interactions with the four ribonucleotide triphosphates. This Haemophilus ducreyi (strain 35000HP / ATCC 700724) protein is CTP synthase.